The following is a 258-amino-acid chain: Regulatory protein RecX (258 aa).

Belongs to the RecX family.

It is found in the cytoplasm. Functionally, modulates RecA activity. The polypeptide is Regulatory protein RecX (Streptococcus pneumoniae (strain Hungary19A-6)).